An 801-amino-acid chain; its full sequence is MQLLHLAILSPFLFAFIIPFLAKYAKRVHTGWFVLILPVLLFIYFLPMIRMTQSGETLRSVLEWIPSLGINFTVYIDGLGLLFALLITGIGSLVTLYSIFYLSKEKEQLGPFYVYLLMFMGAMLGVVLVDNVMVLYMFWELTSLSSFLLIGYWYKREKSRYGAAKSLLITVSGGLCMLGGFILLYLITDSFSIREMVHQVQLIAGHELFIPAMILILLGAFTKSAQFPFYIWLPDAMEAPTPVSAYLHSATMVKAGIYVIARFSPIFAFSAQWFWIVSLVGLFTMVWGSFHAVKQTDLKSILAFSTVSQLGMIISMLGVSAAALHYGHTEYYTVAAMAAIFHLINHATFKGSLFMAVGIIDHETGTRDIRKLGGLMAIMPITFTISLIGTFSMAGLPPFNGFLSKEMFFTSMLRVTHFDLFNVQTWGVLFPLFAWIGSVFTFIYSMKLLFKTFRGNYQPEQLEKQAHEAPVGMLVPPVILVALAVSLFFFPNILSYSLIEPAMNSIYPTLLDGHEKFHVHISQWHGVTTELLMTAGIVVIGTIGYLSLNKWKGIYKLFPSKLTLNRLYDKLLTMMEKGSYRVTKQYMTGFLRDYLLYIFAGFIILIGGAFAIKGGFSFKTEGMAKIGVYEIILTLVMISATVATVFARSRLTAIIALGVVGYTLALFFVIFRAPDLALTQLVIETISVALFLLCFYHLPKLRLKTKTRTFRMTNFIISLGVGVIVTLLGIASSSQRTKDSIASFFVKHSHDLGGGDNVVNVILVDFRGFDTMFEITVLTIAALGIYSMIKTKVKEEGKSGE.

21 consecutive transmembrane segments (helical) span residues 4–21, 28–50, 80–102, 109–128, 132–154, 166–188, 203–222, 229–251, 266–288, 301–323, 338–360, 372–394, 428–450, 471–493, 526–548, 594–616, 626–647, 654–671, 676–698, 710–732, and 772–789; these read LHLAILSPFLFAFIIPFL, VHTGWFVLILPVLLFIYFLPMIR, GLLFALLITGIGSLVTLYSIFYL, LGPFYVYLLMFMGAMLGVVL, VMVLYMFWELTSLSSFLLIGYWY, SLLITVSGGLCMLGGFILLYLIT, IAGHELFIPAMILILLGAFT, FYIWLPDAMEAPTPVSAYLHSAT, IFAFSAQWFWIVSLVGLFTMVWG, ILAFSTVSQLGMIISMLGVSAAA, AAIFHLINHATFKGSLFMAVGII, LGGLMAIMPITFTISLIGTFSMA, VLFPLFAWIGSVFTFIYSMKLLF, VGMLVPPVILVALAVSLFFFPNI, GVTTELLMTAGIVVIGTIGYLSL, YLLYIFAGFIILIGGAFAIKGGF, IGVYEIILTLVMISATVATVFA, IIALGVVGYTLALFFVIF, LALTQLVIETISVALFLLCFYHL, FRMTNFIISLGVGVIVTLLGIAS, and MFEITVLTIAALGIYSMI.

Belongs to the CPA3 antiporters (TC 2.A.63) subunit A family. As to quaternary structure, forms a heterooligomeric complex that consists of seven subunits: MrpA, MrpB, MrpC, MrpD, MrpE, MrpF and MrpG.

It localises to the cell membrane. Mrp complex is a Na(+)/H(+) antiporter that is considered to be the major Na(+) excretion system in B.subtilis. Has a major role in Na(+) resistance and a minor role in Na(+)- and K(+)-dependent pH homeostasis as compared to TetB. MrpA may be the actual Na(+)/H(+) antiporter, although the six other Mrp proteins are all required for Na(+)/H(+) antiport activity and Na(+) resistance. MrpA is required for initiation of sporulation when external Na(+) concentration increases. Also transports Li(+) but not K(+), Ca(2+) or Mg(2+). In Bacillus subtilis (strain 168), this protein is Na(+)/H(+) antiporter subunit A (mrpA).